A 202-amino-acid chain; its full sequence is Small ribosomal subunit protein uS4c (202 aa).

Positions 90–153 (MRLDNVIFRL…KSETIISKNI (64 aa)) constitute an S4 RNA-binding domain.

Belongs to the universal ribosomal protein uS4 family. As to quaternary structure, part of the 30S ribosomal subunit. Contacts protein S5. The interaction surface between S4 and S5 is involved in control of translational fidelity.

It is found in the plastid. Its subcellular location is the chloroplast. One of the primary rRNA binding proteins, it binds directly to 16S rRNA where it nucleates assembly of the body of the 30S subunit. Its function is as follows. With S5 and S12 plays an important role in translational accuracy. This chain is Small ribosomal subunit protein uS4c (rps4), found in Arbusculohypopterygium arbuscula (Moss).